A 133-amino-acid polypeptide reads, in one-letter code: Large-conductance mechanosensitive channel (133 aa).

Helical transmembrane passes span 10-30 and 76-96; these read FAMK…TAFG and GNFI…FCVI.

The protein belongs to the MscL family. As to quaternary structure, homopentamer.

It localises to the cell inner membrane. Its function is as follows. Channel that opens in response to stretch forces in the membrane lipid bilayer. May participate in the regulation of osmotic pressure changes within the cell. The polypeptide is Large-conductance mechanosensitive channel (Campylobacter curvus (strain 525.92)).